A 580-amino-acid chain; its full sequence is Glutamine--tRNA ligase (580 aa).

Positions 41 to 51 (PEPNGYLHIGH) match the 'HIGH' region motif. ATP-binding positions include 42-44 (EPN) and 48-54 (HIGHAKA). Residues Asp-74 and Tyr-218 each coordinate L-glutamine. Residues Thr-237, 285-286 (RL), and 293-295 (MSK) each bind ATP. Residues 292–296 (VMSKR) carry the 'KMSKS' region motif.

This sequence belongs to the class-I aminoacyl-tRNA synthetase family. As to quaternary structure, monomer.

It localises to the cytoplasm. It carries out the reaction tRNA(Gln) + L-glutamine + ATP = L-glutaminyl-tRNA(Gln) + AMP + diphosphate. This chain is Glutamine--tRNA ligase, found in Xylella fastidiosa (strain M12).